The sequence spans 129 residues: Protein BEX2 (129 aa).

Residues 1–37 (MESKVEQGVKNLNMENDHQEKEEKEEKPQDASKRDPI) are disordered. Residues 15–36 (ENDHQEKEEKEEKPQDASKRDP) show a composition bias toward basic and acidic residues. Arginine 51 is modified (omega-N-methylarginine). The segment at 118-122 (HHDHH) is his cluster. Zn(2+) is bound at residue cysteine 126.

This sequence belongs to the BEX family. In terms of assembly, interacts with LMO2, possibly leading to regulate the transcriptional activity of a DNA-binding complex containing LMO2. Interacts with OMP. In terms of tissue distribution, primarily localized to neuronal cells within several regions of the brain, including the olfactory epithelium, bulb, peri/paraventricular nuclei, suprachiasmatic nucleus, arcuate nucleus, median eminence, lateral hypothalamic area, thalamus, hippocampus and cerebellum (at protein level).

Its subcellular location is the cytoplasm. It localises to the nucleus. In terms of biological role, regulator of mitochondrial apoptosis and G1 cell cycle. Regulates the level of PP2A regulatory subunit B and PP2A phosphatase activity. In absence of reductive stress, acts as a pseudosubstrate for the CRL2(FEM1B) complex: associates with FEM1B via zinc, thereby preventing association between FEM1B and its substrates. The chain is Protein BEX2 from Mus musculus (Mouse).